A 137-amino-acid chain; its full sequence is Cellular retinoic acid-binding protein 1 (137 aa).

The Nuclear localization signal motif lies at 21-31; sequence RALGVNAMLRK. 132-134 is an all-trans-retinoate binding site; it reads RIY.

This sequence belongs to the calycin superfamily. Fatty-acid binding protein (FABP) family.

It is found in the cytoplasm. In terms of biological role, cytosolic CRABPs may regulate the access of retinoic acid to the nuclear retinoic acid receptors. The polypeptide is Cellular retinoic acid-binding protein 1 (CRABP1) (Pelodiscus sinensis (Chinese softshell turtle)).